The sequence spans 442 residues: D-serine dehydratase (442 aa).

The residue at position 118 (lysine 118) is an N6-(pyridoxal phosphate)lysine.

It belongs to the serine/threonine dehydratase family. DsdA subfamily. In terms of assembly, monomer. Pyridoxal 5'-phosphate is required as a cofactor.

It catalyses the reaction D-serine = pyruvate + NH4(+). In Escherichia coli O139:H28 (strain E24377A / ETEC), this protein is D-serine dehydratase.